Reading from the N-terminus, the 326-residue chain is Bifunctional pinoresinol-lariciresinol reductase (326 aa).

Residues 25 to 31 (GGTGYLG), Arg-50, and Lys-59 each bind NADP(+). The active-site Proton acceptor is Lys-153. An NADP(+)-binding site is contributed by Arg-157. Residue His-285 participates in substrate binding.

The protein belongs to the NmrA-type oxidoreductase family. Isoflavone reductase subfamily. As to quaternary structure, dimer.

The catalysed reaction is (+)-lariciresinol + NADP(+) = (+)-pinoresinol + NADPH + H(+). It carries out the reaction (-)-secoisolariciresinol + NADP(+) = (+)-lariciresinol + NADPH + H(+). Its function is as follows. Reductase involved in lignan biosynthesis. Catalyzes the enantioselective conversion of (+)-pinoresinol into (+)-lariciresinol and of (+)-lariciresinol into (-)-secoisolariciresinol. Abstracts the 4R-hydride from the NADPH cofactor during catalysis. This is Bifunctional pinoresinol-lariciresinol reductase (PLR1) from Linum album (Flax).